Here is a 155-residue protein sequence, read N- to C-terminus: MTKQVEIFTDGSCLGNPGPGGYGVVLRYKQVEKTLAQGYRLTTNNRMEMMATIVALQALKEPCNVILTTDSQYVRQGITQWIHNWKKRGWKTADKKPVKNADLWQALDKETTRHTIDWRWVKGHAGHRENEMCDELARAAAENPTLDDTGYQPAE.

One can recognise an RNase H type-1 domain in the interval 1 to 142; it reads MTKQVEIFTD…CDELARAAAE (142 aa). Positions 10, 48, 70, and 134 each coordinate Mg(2+).

It belongs to the RNase H family. As to quaternary structure, monomer. It depends on Mg(2+) as a cofactor.

The protein localises to the cytoplasm. It catalyses the reaction Endonucleolytic cleavage to 5'-phosphomonoester.. Its function is as follows. Endonuclease that specifically degrades the RNA of RNA-DNA hybrids. The protein is Ribonuclease HI of Vibrio vulnificus (strain CMCP6).